The following is a 309-amino-acid chain: tRNA dimethylallyltransferase (309 aa).

An ATP-binding site is contributed by 13–20; sequence GPTAVGKS. A substrate-binding site is contributed by 15–20; it reads TAVGKS.

It belongs to the IPP transferase family. Monomer. The cofactor is Mg(2+).

The catalysed reaction is adenosine(37) in tRNA + dimethylallyl diphosphate = N(6)-dimethylallyladenosine(37) in tRNA + diphosphate. In terms of biological role, catalyzes the transfer of a dimethylallyl group onto the adenine at position 37 in tRNAs that read codons beginning with uridine, leading to the formation of N6-(dimethylallyl)adenosine (i(6)A). The protein is tRNA dimethylallyltransferase of Lacticaseibacillus paracasei (strain ATCC 334 / BCRC 17002 / CCUG 31169 / CIP 107868 / KCTC 3260 / NRRL B-441) (Lactobacillus paracasei).